A 313-amino-acid chain; its full sequence is Ribosomal RNA small subunit methyltransferase H (313 aa).

Residues 35-37, Asp-55, Phe-80, Asp-102, and Gln-109 contribute to the S-adenosyl-L-methionine site; that span reads GGH.

This sequence belongs to the methyltransferase superfamily. RsmH family.

Its subcellular location is the cytoplasm. It carries out the reaction cytidine(1402) in 16S rRNA + S-adenosyl-L-methionine = N(4)-methylcytidine(1402) in 16S rRNA + S-adenosyl-L-homocysteine + H(+). Specifically methylates the N4 position of cytidine in position 1402 (C1402) of 16S rRNA. The chain is Ribosomal RNA small subunit methyltransferase H from Shewanella putrefaciens (strain CN-32 / ATCC BAA-453).